Here is a 77-residue protein sequence, read N- to C-terminus: Large ribosomal subunit protein uL24 (77 aa).

This sequence belongs to the universal ribosomal protein uL24 family. Part of the 50S ribosomal subunit.

One of two assembly initiator proteins, it binds directly to the 5'-end of the 23S rRNA, where it nucleates assembly of the 50S subunit. In terms of biological role, one of the proteins that surrounds the polypeptide exit tunnel on the outside of the subunit. The chain is Large ribosomal subunit protein uL24 from Sulfurovum sp. (strain NBC37-1).